Consider the following 357-residue polypeptide: mRNA endoribonuclease toxin LS (357 aa).

In terms of assembly, forms homodimer in solution. Forms a complex with cognate antitoxin RnlB and with enterobacteria phage T4 antitoxin Dmd.

The protein resides in the cytoplasm. Its function is as follows. Toxic component of a type II toxin-antitoxin (TA) system. A stable (half-life 27.6 minutes) endoribonuclease that in the absence of cognate antitoxin RnlB causes generalized RNA degradation. Degrades late enterobacteria phage T4 mRNAs, protecting the host against T4 reproduction. Activity is inhibited by cognate antitoxin RnlB and by enterobacteria phage T4 protein Dmd. Targets cyaA mRNA. This Escherichia coli (strain K12) protein is mRNA endoribonuclease toxin LS (rnlA).